Reading from the N-terminus, the 245-residue chain is Geranylgeranylglyceryl phosphate synthase (245 aa).

Mg(2+) is bound by residues D22 and S51. Sn-glycerol 1-phosphate-binding positions include 169–175, 200–201, and 222–223; these read YLEAGSG, GG, and GT.

This sequence belongs to the GGGP/HepGP synthase family. Group II subfamily. As to quaternary structure, homopentamer. Mg(2+) serves as cofactor.

The protein resides in the cytoplasm. The enzyme catalyses sn-glycerol 1-phosphate + (2E,6E,10E)-geranylgeranyl diphosphate = sn-3-O-(geranylgeranyl)glycerol 1-phosphate + diphosphate. It participates in membrane lipid metabolism; glycerophospholipid metabolism. Inhibited by EDTA in vitro. Prenyltransferase that catalyzes the transfer of the geranylgeranyl moiety of geranylgeranyl diphosphate (GGPP) to the C3 hydroxyl of sn-glycerol-1-phosphate (G1P). This reaction is the first ether-bond-formation step in the biosynthesis of archaeal membrane lipids. Cannot use sn-glycerol-3-phosphate (G3P) or dihydroxyacetonephosphate (DHAP) as substrate. The chain is Geranylgeranylglyceryl phosphate synthase from Methanothermobacter marburgensis (strain ATCC BAA-927 / DSM 2133 / JCM 14651 / NBRC 100331 / OCM 82 / Marburg) (Methanobacterium thermoautotrophicum).